A 526-amino-acid polypeptide reads, in one-letter code: Alpha-N-acetylgalactosaminide alpha-2,6-sialyltransferase 1 (526 aa).

The Cytoplasmic segment spans residues 1–12 (MTRYCRGLSQRQ). Residues 13–33 (AFLLLTVLALLFILLFVVKDP) form a helical; Signal-anchor for type II membrane protein membrane-spanning segment. The Lumenal portion of the chain corresponds to 34 to 526 (RAKDSRCQFI…QRPQSDKAKN (493 aa)). Residues 49 to 182 (SAQENQQKAE…TRRRQRLKAS (134 aa)) are disordered. The segment covering 81-106 (KDLKKQEREAVQGEQAEGKEKRKLET) has biased composition (basic and acidic residues). Polar residues predominate over residues 161-171 (ATKSPASSPHP). N-linked (GlcNAc...) asparagine glycosylation is found at asparagine 206, asparagine 228, asparagine 259, asparagine 303, and asparagine 388. Cystine bridges form between cysteine 207-cysteine 290 and cysteine 293-cysteine 461.

This sequence belongs to the glycosyltransferase 29 family. In terms of processing, glycosylated; autosialylated. As to expression, submaxillary gland, mammary gland, spleen and colon.

The protein resides in the golgi apparatus membrane. The enzyme catalyses a beta-D-galactosyl-(1-&gt;3)-N-acetyl-alpha-D-galactosaminyl derivative + CMP-N-acetyl-beta-neuraminate = a beta-D-galactosyl-(1-&gt;3)-[N-acetyl-alpha-neuraminyl-(2-&gt;6)]-N-acetyl-alpha-D-galactosaminyl derivative + CMP + H(+). It catalyses the reaction a 3-O-[N-acetyl-alpha-D-galactosaminyl]-L-seryl-[protein] + CMP-N-acetyl-beta-neuraminate = a 3-O-[N-acetyl-alpha-neuraminosyl-(2-&gt;6)-N-acetyl-alpha-D-galactosaminyl]-L-seryl-[protein] + CMP + H(+). The catalysed reaction is a 3-O-[N-acetyl-alpha-D-galactosaminyl]-L-threonyl-[protein] + CMP-N-acetyl-beta-neuraminate = a 3-O-[N-acetyl-alpha-neuraminosyl-(2-&gt;6)-N-acetyl-alpha-D-galactosaminyl]-L-threonyl-[protein] + CMP + H(+). It carries out the reaction a 3-O-[beta-D-galactosyl-(1-&gt;3)-N-acetyl-alpha-D-galactosaminyl]-L-seryl-[protein] + CMP-N-acetyl-beta-neuraminate = a 3-O-{beta-D-galactosyl-(1-&gt;3)-[N-acetyl-alpha-neuraminosyl-(2-&gt;6)]-N-acetyl-alpha-D-galactosaminyl}-L-seryl-[protein] + CMP + H(+). The enzyme catalyses a 3-O-[beta-D-galactosyl-(1-&gt;3)-N-acetyl-alpha-D-galactosaminyl]-L-threonyl-[protein] + CMP-N-acetyl-beta-neuraminate = a 3-O-{beta-D-galactosyl-(1-&gt;3)-[N-acetyl-alpha-neuraminosyl-(2-&gt;6)]-N-acetyl-alpha-D-galactosaminyl}-L-threonyl-[protein] + CMP + H(+). It catalyses the reaction a 3-O-[N-acetyl-alpha-neuraminyl-(2-&gt;3)-beta-D-galactosyl-(1-&gt;3)-N-acetyl-alpha-D-galactosaminyl]-L-threonyl-[protein] + CMP-N-acetyl-beta-neuraminate = a 3-O-{alpha-Neu5Ac-(2-&gt;3)-beta-D-Gal-(1-&gt;3)-[alpha-Neu5Ac-(2-&gt;6)]-alpha-D-GalNAc}-L-threonyl-[protein] + CMP + H(+). It functions in the pathway protein modification; protein glycosylation. In terms of biological role, protein sialyltransferase specifically expressed in goblet cells that plays a key role in intestinal host-commensal homeostasis. Conjugates sialic acid with an alpha-2-6 linkage to N-acetylgalactosamine (GalNAc) glycan chains linked to serine or threonine in glycoproteins. Catalyzes the formation of the sialyl-Tn (S-Tn) antigen, an antigen found in intestinal goblet cells. Protein sialylation in globlet cells is essential for mucus integrity and is required to protect the intestinal mucus against excessive bacterial proteolytic degradation. The sequence is that of Alpha-N-acetylgalactosaminide alpha-2,6-sialyltransferase 1 from Mus musculus (Mouse).